Reading from the N-terminus, the 342-residue chain is Holliday junction branch migration complex subunit RuvB (342 aa).

Residues 1 to 185 form a large ATPase domain (RuvB-L) region; sequence MREDYLKSDD…FGINARLEYY (185 aa). ATP contacts are provided by residues Leu-24, Arg-25, Gly-66, Lys-69, Thr-70, Thr-71, 132–134, Arg-175, Tyr-185, and Arg-222; that span reads EDY. A Mg(2+)-binding site is contributed by Thr-70. Residues 186 to 256 are small ATPAse domain (RuvB-S); the sequence is DAKLLTRIVQ…IARIALQALN (71 aa). Positions 259–342 are head domain (RuvB-H); that stretch reads HNGLDDMDNR…PPAQSGTLFE (84 aa). 2 residues coordinate DNA: Arg-314 and Arg-319.

Belongs to the RuvB family. Homohexamer. Forms an RuvA(8)-RuvB(12)-Holliday junction (HJ) complex. HJ DNA is sandwiched between 2 RuvA tetramers; dsDNA enters through RuvA and exits via RuvB. An RuvB hexamer assembles on each DNA strand where it exits the tetramer. Each RuvB hexamer is contacted by two RuvA subunits (via domain III) on 2 adjacent RuvB subunits; this complex drives branch migration. In the full resolvosome a probable DNA-RuvA(4)-RuvB(12)-RuvC(2) complex forms which resolves the HJ.

Its subcellular location is the cytoplasm. It carries out the reaction ATP + H2O = ADP + phosphate + H(+). The RuvA-RuvB-RuvC complex processes Holliday junction (HJ) DNA during genetic recombination and DNA repair, while the RuvA-RuvB complex plays an important role in the rescue of blocked DNA replication forks via replication fork reversal (RFR). RuvA specifically binds to HJ cruciform DNA, conferring on it an open structure. The RuvB hexamer acts as an ATP-dependent pump, pulling dsDNA into and through the RuvAB complex. RuvB forms 2 homohexamers on either side of HJ DNA bound by 1 or 2 RuvA tetramers; 4 subunits per hexamer contact DNA at a time. Coordinated motions by a converter formed by DNA-disengaged RuvB subunits stimulates ATP hydrolysis and nucleotide exchange. Immobilization of the converter enables RuvB to convert the ATP-contained energy into a lever motion, pulling 2 nucleotides of DNA out of the RuvA tetramer per ATP hydrolyzed, thus driving DNA branch migration. The RuvB motors rotate together with the DNA substrate, which together with the progressing nucleotide cycle form the mechanistic basis for DNA recombination by continuous HJ branch migration. Branch migration allows RuvC to scan DNA until it finds its consensus sequence, where it cleaves and resolves cruciform DNA. This chain is Holliday junction branch migration complex subunit RuvB, found in Cytophaga hutchinsonii (strain ATCC 33406 / DSM 1761 / CIP 103989 / NBRC 15051 / NCIMB 9469 / D465).